Consider the following 123-residue polypeptide: Large ribosomal subunit protein bL19 (123 aa).

The protein belongs to the bacterial ribosomal protein bL19 family.

This protein is located at the 30S-50S ribosomal subunit interface and may play a role in the structure and function of the aminoacyl-tRNA binding site. This Laribacter hongkongensis (strain HLHK9) protein is Large ribosomal subunit protein bL19.